The chain runs to 734 residues: MALRFPRFSQGLAQDPTTRRIWFGIATAHDFESHDDITEERLYQNIFASHFGQLAIIFLWTSGNLFHVAWQGNFQSWVQDPLHVRPIAHAIWDPHFGQPAVEAFTRGGALGPVNIAYSGVYQWWYTIGLRTNEDLYTGALFLLFLSAISLIAGWLHLQPKWKPSVSWFKNAESRLNHHLSGLFGVSSLAWTGHLVHVAIPGSRGEYVRWNNFLDVLPHPQGLGPLFTGQWNLYAQNPDSSSHLFGTSQGAGTAILTLLGGFHPQTQSLWLTDMAHHHLAIAFIFLVAGHMYRTNFGIGHSMKDLLEAHIPPGGRLGRGHKGLYDTINNSIHFQLGLALASLGVITSLVAQHMYSLPAYAFIAQDFTTQAALYTHHQYIAGFIMTGAFAHGAIFFIRDYNPEQNEDNVLARMLDHKEAIKSHLSWASLFLGFHTLGLYVHNDVMLAFGTPEKQILIEPIFAQWIQSAHGKTSYGFDVLLSSTNGPAFNAGRSIWLPGWLNAVNENSNSLFLTIGPGDFLVHHAIALGLHTTTLILVKGALDARGSKLMPDKKDFGYSFPCDGPGRGGTCDISAWDAFYLAVFWMLNTIGWVTFYWHWKHITLWQGNVSQFNESSTYLMGWLRDYLWLNSSQLINGYNPFGTNSLSVWAWMFLFGHLVWATGFMFLISWRGYWQELIETLAWAHERTPLANLIRWRDKPVALSIVQARLVGLAHFSVGYIFTYAAFLIASTSGKFG.

8 helical membrane passes run 46 to 69 (IFAS…FHVA), 135 to 158 (LYTG…LHLQ), 175 to 199 (LNHH…HVAI), 273 to 291 (MAHH…GHMY), 330 to 353 (IHFQ…QHMY), 369 to 395 (AALY…IFFI), 417 to 439 (AIKS…LYVH), and 517 to 535 (FLVH…LILV). Positions 559 and 568 each coordinate [4Fe-4S] cluster. A run of 2 helical transmembrane segments spans residues 575-596 (AFYL…YWHW) and 643-665 (LSVW…MFLI). Chlorophyll a contacts are provided by His-654, Met-662, and Tyr-670. Residue Trp-671 coordinates phylloquinone. The chain crosses the membrane as a helical span at residues 707–727 (LVGLAHFSVGYIFTYAAFLIA).

The protein belongs to the PsaA/PsaB family. As to quaternary structure, the PsaA/B heterodimer binds the P700 chlorophyll special pair and subsequent electron acceptors. PSI consists of a core antenna complex that captures photons, and an electron transfer chain that converts photonic excitation into a charge separation. The eukaryotic PSI reaction center is composed of at least 11 subunits. The cofactor is P700 is a chlorophyll a/chlorophyll a' dimer, A0 is one or more chlorophyll a, A1 is one or both phylloquinones and FX is a shared 4Fe-4S iron-sulfur center..

It is found in the plastid. The protein localises to the chloroplast thylakoid membrane. The enzyme catalyses reduced [plastocyanin] + hnu + oxidized [2Fe-2S]-[ferredoxin] = oxidized [plastocyanin] + reduced [2Fe-2S]-[ferredoxin]. PsaA and PsaB bind P700, the primary electron donor of photosystem I (PSI), as well as the electron acceptors A0, A1 and FX. PSI is a plastocyanin-ferredoxin oxidoreductase, converting photonic excitation into a charge separation, which transfers an electron from the donor P700 chlorophyll pair to the spectroscopically characterized acceptors A0, A1, FX, FA and FB in turn. Oxidized P700 is reduced on the lumenal side of the thylakoid membrane by plastocyanin. This chain is Photosystem I P700 chlorophyll a apoprotein A2, found in Chloranthus spicatus (Chulantree).